The chain runs to 229 residues: Sperm-associated microtubule inner protein 5 (229 aa).

Positions 181–201 are disordered; sequence PEFSGPGQTPPSEDPQAPRPC.

In terms of assembly, microtubule inner protein component of sperm flagellar doublet microtubules. Expressed in testis (at protein level).

The protein localises to the cytoplasm. It localises to the cytoskeleton. It is found in the flagellum axoneme. The protein resides in the nucleus. Its function is as follows. Microtubule inner protein (MIP) part of the dynein-decorated doublet microtubules (DMTs) in flagellum axoneme. May serve to reinforce and thus stabilize the microtubule structure in the sperm flagella. This is Sperm-associated microtubule inner protein 5 (Spmip5) from Mus musculus (Mouse).